We begin with the raw amino-acid sequence, 206 residues long: Sclerostin domain-containing protein 1 (206 aa).

The N-terminal stretch at 1–22 is a signal peptide; that stretch reads MLLSAIHFYGLLLACTFTRSYS. Positions 40–68 are disordered; it reads APASPSSNSTLNQARNGGRHYAGTGSDRN. The span at 43–54 shows a compositional bias: polar residues; it reads SPSSNSTLNQAR. N-linked (GlcNAc...) asparagine glycosylation occurs at Asn-47. 4 disulfide bridges follow: Cys-75–Cys-133, Cys-89–Cys-147, Cys-100–Cys-163, and Cys-104–Cys-165. The CTCK domain occupies 75–170; the sequence is CRELRSTKYI…TACKCKRYTR (96 aa). N-linked (GlcNAc...) asparagine glycosylation is present at Asn-173. The interval 176–206 is disordered; sequence SHNFEGTSQAKPVQHHKERKRASKSSKHSTS. Residues 188-206 are compositionally biased toward basic residues; the sequence is VQHHKERKRASKSSKHSTS.

The protein belongs to the sclerostin family. In terms of assembly, interacts with LRP6.

It localises to the secreted. In terms of biological role, can activate or inhibit Wnt signaling in a context-dependent manner. Activates the canonical Wnt pathway whereby acts through Disheveled proteins and beta-catenin. Antagonises Wnt signaling through the canonical pathways presumably by blocking accessibility of certain WNTs to their receptors. Induces posterior neural markers via components of the canonical Wnt pathway. This Gallus gallus (Chicken) protein is Sclerostin domain-containing protein 1 (SOSTDC1).